A 70-amino-acid polypeptide reads, in one-letter code: Small ribosomal subunit protein bS18c (70 aa).

It belongs to the bacterial ribosomal protein bS18 family. Part of the 30S ribosomal subunit.

The protein localises to the plastid. Its subcellular location is the chloroplast. This Gracilaria tenuistipitata var. liui (Red alga) protein is Small ribosomal subunit protein bS18c.